A 117-amino-acid chain; its full sequence is Dolichyl-diphosphooligosaccharide--protein glycosyltransferase subunit DAD1 (117 aa).

The Cytoplasmic segment spans residues 1–33; it reads MAKTSSTTKDAQDLFHAIWSAYSATPTNLKIID. A helical membrane pass occupies residues 34-54; it reads LYVVFAVFTALLQDVYMALVG. Over 55–57 the chain is Lumenal; the sequence is PFP. Residues 58 to 78 form a helical membrane-spanning segment; it reads FNSFLSGVLSCVGTAVLAVCL. Topologically, residues 79–96 are cytoplasmic; sequence RIQVNKENKEFKDLGPER. Residues 97-117 form a helical membrane-spanning segment; sequence AFADFVLCNLVLHLVIMNFLG.

This sequence belongs to the DAD/OST2 family. Component of the oligosaccharyltransferase (OST) complex.

Its subcellular location is the endoplasmic reticulum membrane. Its pathway is protein modification; protein glycosylation. Its function is as follows. Subunit of the oligosaccharyl transferase (OST) complex that catalyzes the initial transfer of a defined glycan (Glc(3)Man(9)GlcNAc(2) in eukaryotes) from the lipid carrier dolichol-pyrophosphate to an asparagine residue within an Asn-X-Ser/Thr consensus motif in nascent polypeptide chains, the first step in protein N-glycosylation. N-glycosylation occurs cotranslationally and the complex associates with the Sec61 complex at the channel-forming translocon complex that mediates protein translocation across the endoplasmic reticulum (ER). All subunits are required for a maximal enzyme activity. The chain is Dolichyl-diphosphooligosaccharide--protein glycosyltransferase subunit DAD1 (DAD1) from Pisum sativum (Garden pea).